We begin with the raw amino-acid sequence, 262 residues long: uncharacterized protein (262 aa).

A divalent metal cation contacts are provided by histidine 7, histidine 9, glutamate 98, histidine 138, histidine 162, and aspartate 212.

The protein belongs to the metallo-dependent hydrolases superfamily. TatD-type hydrolase family. A divalent metal cation is required as a cofactor.

This is an uncharacterized protein from Haemophilus influenzae (strain ATCC 51907 / DSM 11121 / KW20 / Rd).